The chain runs to 63 residues: Protein CYSTEINE-RICH TRANSMEMBRANE MODULE 12 (63 aa).

Positions 1–34 (MQDMRDQNPPQGYPAAEQVSEQPGQDKKKKKPRF) are disordered. Residues 40–56 (KGDRGFIEGCLFALCCC) traverse the membrane as a helical segment.

This sequence belongs to the CYSTM1 family. As to quaternary structure, homodimer and heterodimers. Binds weakly to CYSTM4, CYSTM6 and CYSTM7. As to expression, mostly expressed in roots, flowers and siliques and, to a lower extent, in stems and leaves.

The protein resides in the cell membrane. It localises to the cytoplasm. Involved in resistance to abiotic stress. This Arabidopsis thaliana (Mouse-ear cress) protein is Protein CYSTEINE-RICH TRANSMEMBRANE MODULE 12.